The following is a 261-amino-acid chain: Chanoclavine-I dehydrogenase easD (261 aa).

Residues 1–20 (MPSMTSKVFAITGGASGIGA) form the signal peptide. Ile18 contacts NADP(+). Asn43 carries an N-linked (GlcNAc...) asparagine glycan. Positions 66, 132, 166, 170, and 201 each coordinate NADP(+). The active-site Proton donor is the Tyr166. Lys170 acts as the Lowers pKa of active site Tyr in catalysis.

The protein belongs to the short-chain dehydrogenases/reductases (SDR) family. In terms of assembly, homotetramer.

It carries out the reaction chanoclavine-I + NAD(+) = chanoclavine-I aldehyde + NADH + H(+). It participates in alkaloid biosynthesis; ergot alkaloid biosynthesis. Functionally, chanoclavine-I dehydrogenase; part of the gene cluster that mediates the biosynthesis of fungal ergot alkaloid. DmaW catalyzes the first step of ergot alkaloid biosynthesis by condensing dimethylallyl diphosphate (DMAP) and tryptophan to form 4-dimethylallyl-L-tryptophan. The second step is catalyzed by the methyltransferase easF that methylates 4-dimethylallyl-L-tryptophan in the presence of S-adenosyl-L-methionine, resulting in the formation of 4-dimethylallyl-L-abrine. The catalase easC and the FAD-dependent oxidoreductase easE then transform 4-dimethylallyl-L-abrine to chanoclavine-I which is further oxidized by easD in the presence of NAD(+), resulting in the formation of chanoclavine-I aldehyde. Agroclavine dehydrogenase easG then mediates the conversion of chanoclavine-I aldehyde to agroclavine via a non-enzymatic adduct reaction: the substrate is an iminium intermediate that is formed spontaneously from chanoclavine-I aldehyde in the presence of glutathione. The presence of easA is not required to complete this reaction. Further conversion of agroclavine to paspalic acid is a two-step process involving oxidation of agroclavine to elymoclavine and of elymoclavine to paspalic acid, the second step being performed by the elymoclavine oxidase cloA. Paspalic acid is then further converted to D-lysergic acid. Ergopeptines are assembled from D-lysergic acid and three different amino acids by the D-lysergyl-peptide-synthetases composed each of a monomudular and a trimodular nonribosomal peptide synthetase subunit. LpsB and lpsC encode the monomodular subunits responsible for D-lysergic acid activation and incorporation into the ergopeptine backbone. LpsA1 and A2 subunits encode the trimodular nonribosomal peptide synthetase assembling the tripeptide portion of ergopeptines. LpsA1 is responsible for formation of the major ergopeptine, ergotamine, and lpsA2 for alpha-ergocryptine, the minor ergopeptine of the total alkaloid mixture elaborated by C.purpurea. D-lysergyl-tripeptides are assembled by the nonribosomal peptide synthetases and released as N-(D-lysergyl-aminoacyl)-lactams. Cyclolization of the D-lysergyl-tripeptides is performed by the Fe(2+)/2-ketoglutarate-dependent dioxygenase easH which introduces a hydroxyl group into N-(D-lysergyl-aminoacyl)-lactam at alpha-C of the aminoacyl residue followed by spontaneous condensation with the terminal lactam carbonyl group. This Claviceps purpurea (Ergot fungus) protein is Chanoclavine-I dehydrogenase easD.